The following is a 312-amino-acid chain: Tetraacyldisaccharide 4'-kinase (312 aa).

60 to 67 serves as a coordination point for ATP; that stretch reads IAGGSGKT.

This sequence belongs to the LpxK family.

It carries out the reaction a lipid A disaccharide + ATP = a lipid IVA + ADP + H(+). The protein operates within glycolipid biosynthesis; lipid IV(A) biosynthesis; lipid IV(A) from (3R)-3-hydroxytetradecanoyl-[acyl-carrier-protein] and UDP-N-acetyl-alpha-D-glucosamine: step 6/6. Transfers the gamma-phosphate of ATP to the 4'-position of a tetraacyldisaccharide 1-phosphate intermediate (termed DS-1-P) to form tetraacyldisaccharide 1,4'-bis-phosphate (lipid IVA). The chain is Tetraacyldisaccharide 4'-kinase from Helicobacter acinonychis (strain Sheeba).